The sequence spans 1042 residues: Kinesin-like protein KIN-5A (1042 aa).

A compositionally biased stretch (low complexity) spans 1-14 (MDSNNSKKGSSVKS). Residues 1–45 (MDSNNSKKGSSVKSPCQTPRSTEKSNRDFRVDSNSNSNPVSKNEK) are disordered. Over residues 21-31 (STEKSNRDFRV) the composition is skewed to basic and acidic residues. Residues 32-41 (DSNSNSNPVS) are compositionally biased toward polar residues. One can recognise a Kinesin motor domain in the interval 50 to 392 (NIQVIVRCRP…LDYAHRAKHI (343 aa)). 136 to 143 (GQTGTGKT) serves as a coordination point for ATP. A coiled-coil region spans residues 480-517 (TAGLREKLDKTEKKLYETEQALLDLEEKHRQAVATIKE). Residues 1021 to 1042 (KQMQNGEAKHVSNGRPPLTAIN) form a disordered region.

Belongs to the TRAFAC class myosin-kinesin ATPase superfamily. Kinesin family. KIN-5/BimC subfamily.

The protein resides in the cytoplasm. It is found in the cytoskeleton. It localises to the spindle. Responsible for microtubule translocation. May be important for the organization of phragmoplast-specific arrays of microtubules. Plays an essential role in stabilizing the mitotic spindle. Required during mitotic cytokinesis. This Arabidopsis thaliana (Mouse-ear cress) protein is Kinesin-like protein KIN-5A.